The chain runs to 375 residues: GTPase HflX (375 aa).

Residues 194 to 371 form the Hflx-type G domain; the sequence is PHIAIVGYAS…RIATLLAGTK (178 aa). GTP contacts are provided by residues 200 to 207, 225 to 229, 246 to 249, 314 to 317, and 349 to 351; these read GYASAGKT, FTTIT, DTVG, NKID, and SAK. Mg(2+) contacts are provided by threonine 207 and threonine 227.

The protein belongs to the TRAFAC class OBG-HflX-like GTPase superfamily. HflX GTPase family. Monomer. Associates with the 50S ribosomal subunit. Requires Mg(2+) as cofactor.

It localises to the cytoplasm. GTPase that associates with the 50S ribosomal subunit and may have a role during protein synthesis or ribosome biogenesis. This chain is GTPase HflX, found in Hyperthermus butylicus (strain DSM 5456 / JCM 9403 / PLM1-5).